The chain runs to 249 residues: DNA repair protein RecO (249 aa).

The protein belongs to the RecO family.

Involved in DNA repair and RecF pathway recombination. In Leptospira biflexa serovar Patoc (strain Patoc 1 / Ames), this protein is DNA repair protein RecO.